The primary structure comprises 838 residues: Histidine biosynthesis trifunctional protein (838 aa).

Residues 1–271 (MIFPILPVIS…MVEPRTGYGF (271 aa)) form a phosphoribosyl-AMP cyclohydrolase region. A phosphoribosyl-ATP pyrophosphohydrolase region spans residues 272–360 (CHRETKFTCF…VYFAMVWCIK (89 aa)). The tract at residues 361 to 838 (HGVRLADIEK…IRMERMAETK (478 aa)) is histidinol dehydrogenase. Residues Q660 and H663 each contribute to the Zn(2+) site. Catalysis depends on residues E729 and H730. D764 and H823 together coordinate Zn(2+).

This sequence in the C-terminal section; belongs to the histidinol dehydrogenase family. Zn(2+) is required as a cofactor.

It catalyses the reaction 1-(5-phospho-beta-D-ribosyl)-5'-AMP + H2O = 1-(5-phospho-beta-D-ribosyl)-5-[(5-phospho-beta-D-ribosylamino)methylideneamino]imidazole-4-carboxamide. It carries out the reaction 1-(5-phospho-beta-D-ribosyl)-ATP + H2O = 1-(5-phospho-beta-D-ribosyl)-5'-AMP + diphosphate + H(+). The enzyme catalyses L-histidinol + 2 NAD(+) + H2O = L-histidine + 2 NADH + 3 H(+). The protein operates within amino-acid biosynthesis; L-histidine biosynthesis; L-histidine from 5-phospho-alpha-D-ribose 1-diphosphate: step 2/9. It participates in amino-acid biosynthesis; L-histidine biosynthesis; L-histidine from 5-phospho-alpha-D-ribose 1-diphosphate: step 3/9. Its pathway is amino-acid biosynthesis; L-histidine biosynthesis; L-histidine from 5-phospho-alpha-D-ribose 1-diphosphate: step 9/9. The polypeptide is Histidine biosynthesis trifunctional protein (HIS4) (Candida albicans (Yeast)).